Reading from the N-terminus, the 287-residue chain is mRNA-capping enzyme small subunit (287 aa).

As to quaternary structure, heterodimer of a large and a small subunit.

The protein localises to the virion. It catalyses the reaction a 5'-end (5'-triphosphoguanosine)-ribonucleoside in mRNA + S-adenosyl-L-methionine = a 5'-end (N(7)-methyl 5'-triphosphoguanosine)-ribonucleoside in mRNA + S-adenosyl-L-homocysteine. Functionally, catalyzes the last reaction in the mRNA cap formation pathway. The protein is mRNA-capping enzyme small subunit of Sus scrofa (Pig).